The following is a 346-amino-acid chain: GTPase Obg (346 aa).

One can recognise an Obg domain in the interval Met-1 to Leu-159. The interval Lys-122–Gly-147 is disordered. Residues Ser-132–Gly-147 are compositionally biased toward basic and acidic residues. An OBG-type G domain is found at Ala-160–Arg-336. Residues Gly-166–Ser-173, Phe-191–Thr-195, Asp-218–Gly-221, Thr-288–Asp-291, and Ser-317–Ala-319 each bind GTP. Ser-173 and Thr-193 together coordinate Mg(2+).

The protein belongs to the TRAFAC class OBG-HflX-like GTPase superfamily. OBG GTPase family. In terms of assembly, monomer. The cofactor is Mg(2+).

It is found in the cytoplasm. An essential GTPase which binds GTP, GDP and possibly (p)ppGpp with moderate affinity, with high nucleotide exchange rates and a fairly low GTP hydrolysis rate. Plays a role in control of the cell cycle, stress response, ribosome biogenesis and in those bacteria that undergo differentiation, in morphogenesis control. This chain is GTPase Obg, found in Sorangium cellulosum (strain So ce56) (Polyangium cellulosum (strain So ce56)).